Consider the following 124-residue polypeptide: Small ribosomal subunit protein uS13 (124 aa).

The segment covering 92–117 (RRGLPVRGQRTKSNARTRKGPRKTVA) has biased composition (basic residues). Residues 92–124 (RRGLPVRGQRTKSNARTRKGPRKTVANKKIESK) are disordered.

This sequence belongs to the universal ribosomal protein uS13 family. As to quaternary structure, part of the 30S ribosomal subunit. Forms a loose heterodimer with protein S19. Forms two bridges to the 50S subunit in the 70S ribosome.

Its function is as follows. Located at the top of the head of the 30S subunit, it contacts several helices of the 16S rRNA. In the 70S ribosome it contacts the 23S rRNA (bridge B1a) and protein L5 of the 50S subunit (bridge B1b), connecting the 2 subunits; these bridges are implicated in subunit movement. Contacts the tRNAs in the A and P-sites. The protein is Small ribosomal subunit protein uS13 of Mycoplasmoides gallisepticum (strain R(low / passage 15 / clone 2)) (Mycoplasma gallisepticum).